We begin with the raw amino-acid sequence, 356 residues long: tRNA-specific 2-thiouridylase MnmA 1 (356 aa).

ATP-binding positions include Gly-8–Ser-15 and Met-34. Cys-103 serves as the catalytic Nucleophile. A disulfide bond links Cys-103 and Cys-199. Gly-127 lines the ATP pocket. An interaction with tRNA region spans residues Lys-149–Gln-151. Residue Cys-199 is the Cysteine persulfide intermediate of the active site. The tract at residues Arg-305–Tyr-306 is interaction with tRNA.

Belongs to the MnmA/TRMU family.

Its subcellular location is the cytoplasm. It carries out the reaction S-sulfanyl-L-cysteinyl-[protein] + uridine(34) in tRNA + AH2 + ATP = 2-thiouridine(34) in tRNA + L-cysteinyl-[protein] + A + AMP + diphosphate + H(+). Functionally, catalyzes the 2-thiolation of uridine at the wobble position (U34) of tRNA, leading to the formation of s(2)U34. This chain is tRNA-specific 2-thiouridylase MnmA 1, found in Clostridium botulinum (strain Loch Maree / Type A3).